The chain runs to 258 residues: Polysialic acid transport protein KpsM (258 aa).

The Cytoplasmic portion of the chain corresponds to 1–30 (MARSGFEVQKVTVEALFLREIRTRFGKFRL). One can recognise an ABC transmembrane type-2 domain in the interval 30 to 251 (LGYLWAILEP…FIGLALYRTR (222 aa)). Residues 31 to 54 (GYLWAILEPSAHLLILLGILGYVM) form a helical membrane-spanning segment. The Periplasmic portion of the chain corresponds to 55-61 (HRTMPDI). Residues 62 to 81 (SFPVFLLNGLIPFFIFSSIS) traverse the membrane as a helical segment. The Cytoplasmic portion of the chain corresponds to 82-108 (KRSIGAIEANQGLFNYRPVKPIDTIIA). Residues 109 to 132 (RALLETLIYVAVYILLMLIVWMTG) traverse the membrane as a helical segment. The Periplasmic portion of the chain corresponds to 133-143 (EYFEITNFLQL). Residues 144 to 165 (VLTWSLLIILSCGVGLIFMVVG) traverse the membrane as a helical segment. Residues 166 to 174 (KTFPEMQKV) are Cytoplasmic-facing. Residues 175–195 (LPILLKPLYFISCIMFPLHSI) traverse the membrane as a helical segment. Residues 196-226 (PKQYWSYLLWNPLVHVVELSREAVMPGYISE) lie on the Periplasmic side of the membrane. The chain crosses the membrane as a helical span at residues 227 to 247 (GVSLNYLAMFTLVTLFIGLAL). Topologically, residues 248–258 (YRTREEAMLTS) are cytoplasmic.

Belongs to the ABC-2 integral membrane protein family.

The protein localises to the cell inner membrane. Its function is as follows. KpsM and KpsT constitute a system for the transport of polysialic acid across the cytoplasmic membrane. The sequence is that of Polysialic acid transport protein KpsM (kpsM) from Escherichia coli.